The primary structure comprises 456 residues: Putative alanyl-tRNA editing protein alaX (456 aa).

Zn(2+) is bound by residues His125, His129, Cys240, and His244.

It belongs to the class-II aminoacyl-tRNA synthetase family. Alax-L subfamily. Requires Zn(2+) as cofactor.

Its function is as follows. May function in trans to edit the amino acid moiety from incorrectly charged tRNA(Ala). The polypeptide is Putative alanyl-tRNA editing protein alaX (Saccharomyces cerevisiae (strain ATCC 204508 / S288c) (Baker's yeast)).